The following is a 299-amino-acid chain: MKTKLIVVAGPTAVGKTALGIELAERFNGEIISGDSQQVYRQLNIGTAKATPEEQAAAVHHLIDVRDVDESYSAYDFVTEAQAAITDIVSRGKLPIIVGGTGLYLQSLLEGYHLGGQVDQNQVLAYRSELEQLSDQQLFEKIDSLGIEIKEINRRRAIRALELYRFSDNLENTETCYEPFIIGLDDERSLIYDRINTRVDKMVELGLLEEAKWLYDNFSEAQSARGIGYKELFPYFSGEQTLDEALEKLKQNTRRFAKRQLTWFRNRMTVSFYQISSPEYPENVIQDLAIFLNEEEGEK.

10–17 (GPTAVGKT) contacts ATP. Position 12 to 17 (12 to 17 (TAVGKT)) interacts with substrate. An interaction with substrate tRNA region spans residues 35-38 (DSQQ).

It belongs to the IPP transferase family. As to quaternary structure, monomer. It depends on Mg(2+) as a cofactor.

It catalyses the reaction adenosine(37) in tRNA + dimethylallyl diphosphate = N(6)-dimethylallyladenosine(37) in tRNA + diphosphate. Its function is as follows. Catalyzes the transfer of a dimethylallyl group onto the adenine at position 37 in tRNAs that read codons beginning with uridine, leading to the formation of N6-(dimethylallyl)adenosine (i(6)A). The sequence is that of tRNA dimethylallyltransferase from Streptococcus thermophilus (strain ATCC BAA-491 / LMD-9).